The following is a 229-amino-acid chain: MEYAAIVLAAGQGKRMKAGMNKQLIDLNGIPLIVHSLRLFEEDAACKAIWLVVSETERQTMEKLVAEYQIGKVKGLVNGGAERQDSVYAGLKGMEEAEIVLIHDGARPFVAKPILTKLADEAAQSGAAIAAVPVKDTVKLADKNSVARTVERKNLWAAQTPQAFQYELVLAAHEDAKKHGFLGTDDASLVERLDKRVTIVESDYLNIKLTTEEDLLFAETILKKRENQL.

The protein belongs to the IspD/TarI cytidylyltransferase family. IspD subfamily.

The catalysed reaction is 2-C-methyl-D-erythritol 4-phosphate + CTP + H(+) = 4-CDP-2-C-methyl-D-erythritol + diphosphate. It participates in isoprenoid biosynthesis; isopentenyl diphosphate biosynthesis via DXP pathway; isopentenyl diphosphate from 1-deoxy-D-xylulose 5-phosphate: step 2/6. Its function is as follows. Catalyzes the formation of 4-diphosphocytidyl-2-C-methyl-D-erythritol from CTP and 2-C-methyl-D-erythritol 4-phosphate (MEP). This Shouchella clausii (strain KSM-K16) (Alkalihalobacillus clausii) protein is 2-C-methyl-D-erythritol 4-phosphate cytidylyltransferase.